Here is a 242-residue protein sequence, read N- to C-terminus: 4-hydroxy-tetrahydrodipicolinate reductase (242 aa).

NAD(+)-binding positions include 8 to 13, 75 to 77, and 99 to 102; these read GAKGRM, GTT, and ATNM. The active-site Proton donor/acceptor is H131. H132 is a binding site for (S)-2,3,4,5-tetrahydrodipicolinate. K135 functions as the Proton donor in the catalytic mechanism. 141–142 contributes to the (S)-2,3,4,5-tetrahydrodipicolinate binding site; that stretch reads GT.

It belongs to the DapB family.

The protein resides in the cytoplasm. It carries out the reaction (S)-2,3,4,5-tetrahydrodipicolinate + NAD(+) + H2O = (2S,4S)-4-hydroxy-2,3,4,5-tetrahydrodipicolinate + NADH + H(+). The enzyme catalyses (S)-2,3,4,5-tetrahydrodipicolinate + NADP(+) + H2O = (2S,4S)-4-hydroxy-2,3,4,5-tetrahydrodipicolinate + NADPH + H(+). It functions in the pathway amino-acid biosynthesis; L-lysine biosynthesis via DAP pathway; (S)-tetrahydrodipicolinate from L-aspartate: step 4/4. Functionally, catalyzes the conversion of 4-hydroxy-tetrahydrodipicolinate (HTPA) to tetrahydrodipicolinate. In Campylobacter jejuni subsp. jejuni serotype O:6 (strain 81116 / NCTC 11828), this protein is 4-hydroxy-tetrahydrodipicolinate reductase.